A 105-amino-acid polypeptide reads, in one-letter code: Keratin-associated protein 17-1 (105 aa).

Interacts with hair keratins.

In the hair cortex, hair keratin intermediate filaments are embedded in an interfilamentous matrix, consisting of hair keratin-associated proteins (KRTAP), which are essential for the formation of a rigid and resistant hair shaft through their extensive disulfide bond cross-linking with abundant cysteine residues of hair keratins. The matrix proteins include the high-sulfur and high-glycine-tyrosine keratins. This chain is Keratin-associated protein 17-1 (KRTAP17-1), found in Homo sapiens (Human).